The sequence spans 460 residues: Homocitrate synthase (460 aa).

Residues 3–258 enclose the Pyruvate carboxyltransferase domain; that stretch reads VGILDSTLRE…IEVVKLNKLQ (256 aa). R11 is a binding site for 2-oxoglutarate. E12 is a binding site for Mg(2+). Positions 75, 135, and 169 each coordinate 2-oxoglutarate. The Mg(2+) site is built by H197 and H199. Residue H291 is the Proton acceptor of the active site.

Belongs to the alpha-IPM synthase/homocitrate synthase family. Homocitrate synthase LYS20/LYS21 subfamily. Forms a homotetramer in the absence of lysine, and is in hexadecamer-octamer equilibrium in the presence of lysine. Mg(2+) is required as a cofactor. Mn(2+) serves as cofactor.

It catalyses the reaction acetyl-CoA + 2-oxoglutarate + H2O = (2R)-homocitrate + CoA + H(+). Its pathway is amino-acid biosynthesis; L-lysine biosynthesis via AAA pathway; L-alpha-aminoadipate from 2-oxoglutarate: step 1/5. With respect to regulation, inhibited by lysine. In terms of biological role, catalyzes the aldol-type condensation of 2-oxoglutarate with acetyl-CoA to yield homocitrate. Carries out the first step of the alpha-aminoadipate (AAA) lysine biosynthesis pathway. This is Homocitrate synthase from Sulfurisphaera tokodaii (strain DSM 16993 / JCM 10545 / NBRC 100140 / 7) (Sulfolobus tokodaii).